Here is a 1050-residue protein sequence, read N- to C-terminus: Beta-galactosidase (1050 aa).

Asn110 and Asp209 together coordinate substrate. Na(+) is bound at residue Asp209. Mg(2+) contacts are provided by Glu432, His434, and Glu477. Substrate-binding positions include Glu477 and 553-556; that span reads EYAH. Glu477 serves as the catalytic Proton donor. Glu553 (nucleophile) is an active-site residue. Residue Asn613 coordinates Mg(2+). The Na(+) site is built by Phe617 and Asn620. Residues Asn620 and Trp1023 each coordinate substrate.

This sequence belongs to the glycosyl hydrolase 2 family. As to quaternary structure, homotetramer. The cofactor is Mg(2+). It depends on Na(+) as a cofactor.

It catalyses the reaction Hydrolysis of terminal non-reducing beta-D-galactose residues in beta-D-galactosides.. The chain is Beta-galactosidase from Yersinia enterocolitica serotype O:8 / biotype 1B (strain NCTC 13174 / 8081).